The following is a 250-amino-acid chain: Hydroxyacylglutathione hydrolase (250 aa).

The Zn(2+) site is built by histidine 52, histidine 54, aspartate 56, histidine 57, histidine 107, aspartate 128, and histidine 166.

This sequence belongs to the metallo-beta-lactamase superfamily. Glyoxalase II family. As to quaternary structure, monomer. Zn(2+) serves as cofactor.

The catalysed reaction is an S-(2-hydroxyacyl)glutathione + H2O = a 2-hydroxy carboxylate + glutathione + H(+). It participates in secondary metabolite metabolism; methylglyoxal degradation; (R)-lactate from methylglyoxal: step 2/2. In terms of biological role, thiolesterase that catalyzes the hydrolysis of S-D-lactoyl-glutathione to form glutathione and D-lactic acid. The protein is Hydroxyacylglutathione hydrolase of Neisseria meningitidis serogroup A / serotype 4A (strain DSM 15465 / Z2491).